The sequence spans 348 residues: Dihydroorotase (348 aa).

Positions 17 and 19 each coordinate Zn(2+). Substrate-binding positions include 19–21 (HLR) and Asn-45. Lys-103, His-140, and His-178 together coordinate Zn(2+). Residue Lys-103 is modified to N6-carboxylysine. His-140 contributes to the substrate binding site. Leu-223 provides a ligand contact to substrate. Asp-251 serves as a coordination point for Zn(2+). Residue Asp-251 is part of the active site. Positions 255 and 267 each coordinate substrate.

This sequence belongs to the metallo-dependent hydrolases superfamily. DHOase family. Class II DHOase subfamily. In terms of assembly, homodimer. Requires Zn(2+) as cofactor.

It carries out the reaction (S)-dihydroorotate + H2O = N-carbamoyl-L-aspartate + H(+). It functions in the pathway pyrimidine metabolism; UMP biosynthesis via de novo pathway; (S)-dihydroorotate from bicarbonate: step 3/3. In terms of biological role, catalyzes the reversible cyclization of carbamoyl aspartate to dihydroorotate. In Escherichia coli (strain UTI89 / UPEC), this protein is Dihydroorotase.